We begin with the raw amino-acid sequence, 456 residues long: Cell cycle checkpoint control protein Rad9 (456 aa).

The short motif at 300–302 (KRK) is the Nuclear localization signal element.

Belongs to the rad9 family. As to quaternary structure, component of the 9-1-1 checkpoint clamp complex consisting of Rad9 isoform A, Rad1 and Hus1-like; the interaction with Hus1-like is direct. Does not interact directly with Rad1; this interaction is probably mediated by Hus1-like. This complex probably also forms with Rad9 isoform B, however 9-1-1 complex containing Rad9 isoform A localizes to the nuclear periphery. Interacts with Brca2. As to expression, expressed in ovary.

It is found in the nucleus envelope. Its subcellular location is the nucleus. Functionally, component of the Rad9-Rad1-Hus1 (9-1-1) checkpoint clamp complex. Its function is as follows. Targets the 9-1-1 complex to the nuclear periphery. Targeting to the nuclear periphery is disrupted in the presence of persistent double stranded break DNA damage, possibly as a function of the meiotic checkpoint. This Drosophila melanogaster (Fruit fly) protein is Cell cycle checkpoint control protein Rad9.